Consider the following 194-residue polypeptide: Large ribosomal subunit protein bL25 (194 aa).

Belongs to the bacterial ribosomal protein bL25 family. CTC subfamily. As to quaternary structure, part of the 50S ribosomal subunit; part of the 5S rRNA/L5/L18/L25 subcomplex. Contacts the 5S rRNA. Binds to the 5S rRNA independently of L5 and L18.

Functionally, this is one of the proteins that binds to the 5S RNA in the ribosome where it forms part of the central protuberance. This chain is Large ribosomal subunit protein bL25, found in Geotalea uraniireducens (strain Rf4) (Geobacter uraniireducens).